Here is a 283-residue protein sequence, read N- to C-terminus: MKQYLELCRRIVSEGEWVANERTGKHCLTVINADLEYDVANNQFPLITTRKSYWKAAIAEFLGYIRGYDNAADFRALGTKTWDANANENAAWLANPHRRGVDDMGRVYGVQGRAWRKPNGETIDQLRKIVNNLTKGIDDRGEILTFFNPGEFDLGCLRPCMHTHTFSLVGDTLHLTSYQRSCDVPLGLNFNQIQVFTFLALMAQITGKKAGKAYHKIVNAHIYEDQLELMRDVQLKREPFPLPKLEINPDIKTLEDLETWVTMDDFKVVGYQSHEPIKYPFSV.

Residue Arg-22 participates in dUMP binding. The active-site Nucleophile is the Cys-160. Residues 180–183, Asn-191, and 221–223 each bind dUMP; these read RSCD and HIY. Asp-183 lines the (6R)-5,10-methylene-5,6,7,8-tetrahydrofolate pocket. Ser-282 provides a ligand contact to (6R)-5,10-methylene-5,6,7,8-tetrahydrofolate.

Belongs to the thymidylate synthase family. Bacterial-type ThyA subfamily. As to quaternary structure, homodimer.

It localises to the cytoplasm. The enzyme catalyses dUMP + (6R)-5,10-methylene-5,6,7,8-tetrahydrofolate = 7,8-dihydrofolate + dTMP. It functions in the pathway pyrimidine metabolism; dTTP biosynthesis. Functionally, catalyzes the reductive methylation of 2'-deoxyuridine-5'-monophosphate (dUMP) to 2'-deoxythymidine-5'-monophosphate (dTMP) while utilizing 5,10-methylenetetrahydrofolate (mTHF) as the methyl donor and reductant in the reaction, yielding dihydrofolate (DHF) as a by-product. This enzymatic reaction provides an intracellular de novo source of dTMP, an essential precursor for DNA biosynthesis. The polypeptide is Thymidylate synthase (Haemophilus influenzae (strain ATCC 51907 / DSM 11121 / KW20 / Rd)).